A 61-amino-acid chain; its full sequence is Potassium channel toxin alpha-KTx 18.1 (61 aa).

The N-terminal stretch at 1 to 24 is a signal peptide; that stretch reads MRFTGIILILISMTLIDSFFEMKV. Cystine bridges form between C33–C52, C38–C57, and C42–C59.

Expressed by the venom gland.

It localises to the secreted. Its function is as follows. Reversible blocker of both Kv1.3/KCNA3 potassium channels (high affinity) and Shaker B (mammalian Kv1.1 analog) potassium channels (very low affinity). The protein is Potassium channel toxin alpha-KTx 18.1 of Tityus obscurus (Amazonian scorpion).